A 180-amino-acid polypeptide reads, in one-letter code: Acireductone dioxygenase (180 aa).

His-97, His-99, Glu-103, and His-141 together coordinate Fe(2+). Ni(2+) contacts are provided by His-97, His-99, Glu-103, and His-141.

This sequence belongs to the acireductone dioxygenase (ARD) family. Monomer. Requires Fe(2+) as cofactor. Ni(2+) serves as cofactor.

The enzyme catalyses 1,2-dihydroxy-5-(methylsulfanyl)pent-1-en-3-one + O2 = 3-(methylsulfanyl)propanoate + CO + formate + 2 H(+). It catalyses the reaction 1,2-dihydroxy-5-(methylsulfanyl)pent-1-en-3-one + O2 = 4-methylsulfanyl-2-oxobutanoate + formate + 2 H(+). It functions in the pathway amino-acid biosynthesis; L-methionine biosynthesis via salvage pathway; L-methionine from S-methyl-5-thio-alpha-D-ribose 1-phosphate: step 5/6. Functionally, catalyzes 2 different reactions between oxygen and the acireductone 1,2-dihydroxy-3-keto-5-methylthiopentene (DHK-MTPene) depending upon the metal bound in the active site. Fe-containing acireductone dioxygenase (Fe-ARD) produces formate and 2-keto-4-methylthiobutyrate (KMTB), the alpha-ketoacid precursor of methionine in the methionine recycle pathway. Ni-containing acireductone dioxygenase (Ni-ARD) produces methylthiopropionate, carbon monoxide and formate, and does not lie on the methionine recycle pathway. The sequence is that of Acireductone dioxygenase from Cronobacter sakazakii (Enterobacter sakazakii).